Reading from the N-terminus, the 348-residue chain is tRNA-specific 2-thiouridylase MnmA (348 aa).

Residues 8-15 (LLSGGVDS) and Met34 each bind ATP. Cys105 serves as the catalytic Nucleophile. An intrachain disulfide couples Cys105 to Cys197. An ATP-binding site is contributed by Gly129. The segment at 147–149 (KDQ) is interaction with tRNA. Cys197 acts as the Cysteine persulfide intermediate in catalysis.

It belongs to the MnmA/TRMU family.

It is found in the cytoplasm. The enzyme catalyses S-sulfanyl-L-cysteinyl-[protein] + uridine(34) in tRNA + AH2 + ATP = 2-thiouridine(34) in tRNA + L-cysteinyl-[protein] + A + AMP + diphosphate + H(+). Catalyzes the 2-thiolation of uridine at the wobble position (U34) of tRNA, leading to the formation of s(2)U34. This chain is tRNA-specific 2-thiouridylase MnmA, found in Fervidobacterium nodosum (strain ATCC 35602 / DSM 5306 / Rt17-B1).